Consider the following 421-residue polypeptide: Medium-chain specific acyl-CoA dehydrogenase, mitochondrial (421 aa).

The transit peptide at 1–25 (MAAGFGRCCRVLRSISRFQWRSQHT) directs the protein to the mitochondrion. Residue Lys-69 is modified to N6-acetyllysine; alternate. Position 69 is an N6-succinyllysine; alternate (Lys-69). 158–167 (YCVTEPGAGS) provides a ligand contact to FAD. Residue Ser-167 participates in octanoyl-CoA binding. At Lys-179 the chain carries N6-succinyllysine. Residue 191–193 (WIT) coordinates FAD. Residues Lys-212, Lys-217, and Lys-271 each carry the N6-acetyllysine; alternate modification. 3 positions are modified to N6-succinyllysine; alternate: Lys-212, Lys-217, and Lys-271. Asp-278 is a binding site for octanoyl-CoA. Lys-279 carries the N6-acetyllysine modification. Arg-281 is a binding site for octanoyl-CoA. An N6-acetyllysine modification is found at Lys-301. Residues 306 to 308 (RKT) and 316 to 317 (HQ) each bind FAD. Residues Arg-349 and Thr-351 each contribute to the octanoyl-CoA site. Thr-351 is subject to Phosphothreonine. 374–378 (QILGG) serves as a coordination point for FAD. Glu-401 serves as a coordination point for octanoyl-CoA. The active-site Proton acceptor is the Glu-401. 402 to 405 (GTSQ) contributes to the FAD binding site.

It belongs to the acyl-CoA dehydrogenase family. As to quaternary structure, homotetramer. Interacts with the heterodimeric electron transfer flavoprotein ETF. FAD is required as a cofactor. Acetylated. Could occur at proximity of the cofactor-binding sites and reduce the catalytic activity. Could be deacetylated by SIRT3.

It localises to the mitochondrion matrix. It carries out the reaction a medium-chain 2,3-saturated fatty acyl-CoA + oxidized [electron-transfer flavoprotein] + H(+) = a medium-chain (2E)-enoyl-CoA + reduced [electron-transfer flavoprotein]. It catalyses the reaction pentanoyl-CoA + oxidized [electron-transfer flavoprotein] + H(+) = (2E)-pentenoyl-CoA + reduced [electron-transfer flavoprotein]. The catalysed reaction is hexanoyl-CoA + oxidized [electron-transfer flavoprotein] + H(+) = (2E)-hexenoyl-CoA + reduced [electron-transfer flavoprotein]. The enzyme catalyses octanoyl-CoA + oxidized [electron-transfer flavoprotein] + H(+) = (2E)-octenoyl-CoA + reduced [electron-transfer flavoprotein]. It carries out the reaction decanoyl-CoA + oxidized [electron-transfer flavoprotein] + H(+) = (2E)-decenoyl-CoA + reduced [electron-transfer flavoprotein]. It catalyses the reaction dodecanoyl-CoA + oxidized [electron-transfer flavoprotein] + H(+) = (2E)-dodecenoyl-CoA + reduced [electron-transfer flavoprotein]. The catalysed reaction is tetradecanoyl-CoA + oxidized [electron-transfer flavoprotein] + H(+) = (2E)-tetradecenoyl-CoA + reduced [electron-transfer flavoprotein]. The enzyme catalyses oxidized [electron-transfer flavoprotein] + hexadecanoyl-CoA + H(+) = (2E)-hexadecenoyl-CoA + reduced [electron-transfer flavoprotein]. It functions in the pathway lipid metabolism; mitochondrial fatty acid beta-oxidation. Medium-chain specific acyl-CoA dehydrogenase is one of the acyl-CoA dehydrogenases that catalyze the first step of mitochondrial fatty acid beta-oxidation, an aerobic process breaking down fatty acids into acetyl-CoA and allowing the production of energy from fats. The first step of fatty acid beta-oxidation consists in the removal of one hydrogen from C-2 and C-3 of the straight-chain fatty acyl-CoA thioester, resulting in the formation of trans-2-enoyl-CoA. Electron transfer flavoprotein (ETF) is the electron acceptor that transfers electrons to the main mitochondrial respiratory chain via ETF-ubiquinone oxidoreductase (ETF dehydrogenase). Among the different mitochondrial acyl-CoA dehydrogenases, medium-chain specific acyl-CoA dehydrogenase acts specifically on acyl-CoAs with saturated 6 to 12 carbons long primary chains. The chain is Medium-chain specific acyl-CoA dehydrogenase, mitochondrial from Pan troglodytes (Chimpanzee).